The following is a 400-amino-acid chain: MAKIDFDRSKEHVNIGTIGHVDHGKTTLTAAIATVLAKHVEGNEARDYGSIDNAPEERERGITINTSHIEYNTEKRHYAHVDCPGHADYVKNMITGAAQMDGAILVVAATDGPMPQTREHILLSKQVGVPKMVVFLNKVDLLGSGSEAEEMADLVEFEIRDLLSQYEFDGENTPVVRGSALKALNGEKAWEDKVMELMSQVDNWIDAPLREVDKPFLMAVEDVFTITGRGTVATGKVERGELKINEEVDIVGYTEKPKRTTVTGIEMFRKNLKTALAGDNAGLLLRGINREQIERGQVLAKPGTIVPHTKFKAAIYALKKEEGGRHTPFFKNYKPQFYFRTTDVTGGIELPNNIEMVTPGDNVDLIVDLISPIAVEVGTKFSIREGGRTVGAGSVTEIVK.

One can recognise a tr-type G domain in the interval 10–209 (KEHVNIGTIG…QVDNWIDAPL (200 aa)). Positions 19 to 26 (GHVDHGKT) are G1. 19 to 26 (GHVDHGKT) is a GTP binding site. A Mg(2+)-binding site is contributed by Thr-26. The interval 61–65 (GITIN) is G2. Residues 82-85 (DCPG) form a G3 region. Residues 82–86 (DCPGH) and 137–140 (NKVD) contribute to the GTP site. The tract at residues 137-140 (NKVD) is G4. Residues 179–181 (SAL) are G5.

This sequence belongs to the TRAFAC class translation factor GTPase superfamily. Classic translation factor GTPase family. EF-Tu/EF-1A subfamily. Monomer.

The protein localises to the cytoplasm. The enzyme catalyses GTP + H2O = GDP + phosphate + H(+). GTP hydrolase that promotes the GTP-dependent binding of aminoacyl-tRNA to the A-site of ribosomes during protein biosynthesis. This is Elongation factor Tu from Mycoplasma mobile (strain ATCC 43663 / 163K / NCTC 11711) (Mesomycoplasma mobile).